Consider the following 380-residue polypeptide: Alpha-glucoside transport system permease protein AglG (380 aa).

The next 6 membrane-spanning stretches (helical) occupy residues 13 to 33 (VHLS…GLLI), 179 to 199 (VIPI…PFPG), 202 to 222 (VLLA…LIPL), 239 to 259 (TYMG…IYLL), 288 to 308 (IILP…FLWT), and 344 to 364 (EILT…FFAL). The region spanning 167–364 (FLNSLTVAVP…VVPLIVFFAL (198 aa)) is the ABC transmembrane type-1 domain.

Belongs to the binding-protein-dependent transport system permease family. MalFG subfamily.

The protein localises to the cell inner membrane. In terms of biological role, part of the binding-protein-dependent transport system for alpha-glucosides such as sucrose, maltose and trehalose. Probably responsible for the translocation of the substrate across the membrane. The polypeptide is Alpha-glucoside transport system permease protein AglG (aglG) (Rhizobium meliloti (strain 1021) (Ensifer meliloti)).